The chain runs to 188 residues: Transmembrane protein 160 (188 aa).

A mitochondrion-targeting transit peptide spans 1 to 96 (MGGGWWWARA…ISFMQSDMGR (96 aa)). The tract at residues 24 to 52 (PPQRPRSGGARGSFAPGHGPRAGASPPPV) is disordered. At serine 48 the chain carries Phosphoserine. 2 helical membrane passes run 102-122 (FFLLGGLCVVWGSASYAVGLA) and 135-155 (AAVGAGAVLAASLLWACAVGL). Positions 168-188 (PEDDGTASAEGPDEAGRPPPE) are disordered.

The protein belongs to the TMEM160 family.

The protein resides in the mitochondrion inner membrane. The protein is Transmembrane protein 160 of Homo sapiens (Human).